Reading from the N-terminus, the 2439-residue chain is Mucin-6 (2439 aa).

A signal peptide spans Met1–Thr22. Positions Gly43–Thr214 constitute a VWFD 1 domain. 2 disulfide bridges follow: Cys45/Cys176 and Cys67/Cys213. Asn268 carries an N-linked (GlcNAc...) asparagine glycan. The region spanning Cys302–Cys357 is the TIL domain. Residues Gly395 to Ser579 form the VWFD 2 domain. 2 disulfide bridges follow: Cys397–Cys533 and Cys419–Cys578. N-linked (GlcNAc...) asparagine glycans are attached at residues Asn486 and Asn659. The 173-residue stretch at Ser866–Gly1038 folds into the VWFD 3 domain. 4 disulfide bridges follow: Cys868-Cys1002, Cys890-Cys1037, Cys899-Cys999, and Cys917-Cys924. N-linked (GlcNAc...) asparagine glycans are attached at residues Asn975 and Asn1179. Disordered regions lie at residues Pro1202–Val1455, Ala1471–Pro1626, Ser1642–Thr1834, Ser1868–Pro1983, Ala2033–Ser2077, Ser2090–Pro2196, Val2233–Thr2278, and Leu2323–Val2348. Over residues Thr1224 to Thr1265 the composition is skewed to low complexity. The segment covering Thr1276–Leu1286 has biased composition (polar residues). Low complexity predominate over residues Ser1294–Thr1339. Polar residues predominate over residues Ser1340–Leu1351. 2 stretches are compositionally biased toward low complexity: residues Pro1352–Thr1373 and Thr1381–Pro1415. Composition is skewed to polar residues over residues Val1416 to Val1455, Ala1471 to Thr1481, and Leu1490 to Lys1520. Low complexity-rich tracts occupy residues Thr1521–Ser1567 and Thr1574–Thr1611. The 1; truncated repeat unit spans residues Thr1561–Ser1738. Positions His1607 to His1953 are approximate repeats. Residues Leu1659–Asn1686 show a composition bias toward polar residues. A compositionally biased stretch (low complexity) spans Thr1687–Ser1768. A compositionally biased stretch (polar residues) spans Ile1769–Leu1793. Residues Thr1785–His1953 form repeat 2. Composition is skewed to low complexity over residues Pro1794 to Thr1834 and Thr1891 to Ser1917. Positions Leu1918–Leu1962 are enriched in polar residues. The span at Pro1963–Pro1983 shows a compositional bias: low complexity. Residues Leu2052–Gly2070 show a composition bias toward polar residues. The span at Ser2090–Pro2102 shows a compositional bias: low complexity. A compositionally biased stretch (polar residues) spans Ile2107–Pro2120. A compositionally biased stretch (low complexity) spans Val2121 to Pro2196. A compositionally biased stretch (polar residues) spans His2240–Phe2264. A compositionally biased stretch (low complexity) spans Ser2265–Thr2278. Polar residues predominate over residues Leu2323–Gly2347. 4 cysteine pairs are disulfide-bonded: Cys2349–Cys2396, Cys2363–Cys2410, Cys2372–Cys2430, and Cys2376–Cys2432. Residues Cys2349–Gly2438 form the CTCK domain.

In terms of assembly, multimer; disulfide-linked. O-glycosylated. As to expression, expressed in the regenerative zone of gastric antrum, gastric body mucosa and gastric incisura mucosa. Expressed in the deeper mucous glands of gastric antrum. Overexpressed in Helicobacter pylori infected gastric epithelium. Highly expressed in duodenal Brunner's glands, gall bladder, seminal vesicle, pancreatic centroacinar cells and ducts, and periductal glands of the common bile duct.

The protein localises to the secreted. May provide a mechanism for modulation of the composition of the protective mucus layer related to acid secretion or the presence of bacteria and noxious agents in the lumen. Plays an important role in the cytoprotection of epithelial surfaces and are used as tumor markers in a variety of cancers. May play a role in epithelial organogenesis. This chain is Mucin-6 (MUC6), found in Homo sapiens (Human).